The following is a 74-amino-acid chain: uncharacterized protein (74 aa).

Composition is skewed to basic and acidic residues over residues 1–13 (MKKQ…HQLK) and 20–60 (IKAK…KSFE). The tract at residues 1-74 (MKKQKSIDKH…ESQMDWHQYK (74 aa)) is disordered. Positions 64-74 (NESQMDWHQYK) are enriched in polar residues.

This is an uncharacterized protein from Bacillus subtilis (strain 168).